A 190-amino-acid polypeptide reads, in one-letter code: Probable RNA-binding protein 18 (190 aa).

The RRM domain maps to 25 to 106 (HRLWIGNVDP…KKLVVRWAHA (82 aa)).

The polypeptide is Probable RNA-binding protein 18 (rbm18) (Xenopus laevis (African clawed frog)).